A 367-amino-acid polypeptide reads, in one-letter code: Molybdopterin synthase catalytic subunit (367 aa).

Substrate contacts are provided by residues 101 to 102 (HR), Lys117, and 124 to 126 (KKE). A disordered region spans residues 325–350 (RHFTKREPSSMEAAPPKKSRKKSYSA).

The protein belongs to the MoaE family. MOCS2B subfamily. As to quaternary structure, heterotetramer; composed of 2 small (Mocs2A) and 2 large (Mocs2B) subunits. Component of the Ada2a-containing (ATAC) complex composed of at least Ada2a, Atac1, Hcf, Ada3, Gcn5, Mocs2B, Charac-14, Atac3, Atac2, NC2beta and wds.

It is found in the cytoplasm. Its subcellular location is the nucleus. It carries out the reaction 2 [molybdopterin-synthase sulfur-carrier protein]-C-terminal-Gly-aminoethanethioate + cyclic pyranopterin phosphate + H2O = molybdopterin + 2 [molybdopterin-synthase sulfur-carrier protein]-C-terminal Gly-Gly + 2 H(+). It participates in cofactor biosynthesis; molybdopterin biosynthesis. Its function is as follows. Catalytic subunit of the molybdopterin synthase complex, a complex that catalyzes the conversion of precursor Z into molybdopterin. Acts by mediating the incorporation of 2 sulfur atoms from thiocarboxylated Mocs2A into precursor Z to generate a dithiolene group. Involved during biosynthesis of the molybdenum cofactor. This is Molybdopterin synthase catalytic subunit from Drosophila melanogaster (Fruit fly).